A 639-amino-acid chain; its full sequence is 1-deoxy-D-xylulose-5-phosphate synthase (639 aa).

Thiamine diphosphate is bound by residues H76 and 117 to 119 (AHS). A Mg(2+)-binding site is contributed by D148. Thiamine diphosphate is bound by residues 149 to 150 (GS), N181, Y288, and E370. N181 is a binding site for Mg(2+).

The protein belongs to the transketolase family. DXPS subfamily. Homodimer. Requires Mg(2+) as cofactor. Thiamine diphosphate is required as a cofactor.

It carries out the reaction D-glyceraldehyde 3-phosphate + pyruvate + H(+) = 1-deoxy-D-xylulose 5-phosphate + CO2. The protein operates within metabolic intermediate biosynthesis; 1-deoxy-D-xylulose 5-phosphate biosynthesis; 1-deoxy-D-xylulose 5-phosphate from D-glyceraldehyde 3-phosphate and pyruvate: step 1/1. Catalyzes the acyloin condensation reaction between C atoms 2 and 3 of pyruvate and glyceraldehyde 3-phosphate to yield 1-deoxy-D-xylulose-5-phosphate (DXP). This Leptothrix cholodnii (strain ATCC 51168 / LMG 8142 / SP-6) (Leptothrix discophora (strain SP-6)) protein is 1-deoxy-D-xylulose-5-phosphate synthase.